Consider the following 538-residue polypeptide: Bifunctional purine biosynthesis protein PurH (538 aa).

Residues 6-158 (KHIPAPDLHR…KNHAYVATVV (153 aa)) enclose the MGS-like domain.

It belongs to the PurH family.

It catalyses the reaction (6R)-10-formyltetrahydrofolate + 5-amino-1-(5-phospho-beta-D-ribosyl)imidazole-4-carboxamide = 5-formamido-1-(5-phospho-D-ribosyl)imidazole-4-carboxamide + (6S)-5,6,7,8-tetrahydrofolate. It carries out the reaction IMP + H2O = 5-formamido-1-(5-phospho-D-ribosyl)imidazole-4-carboxamide. It participates in purine metabolism; IMP biosynthesis via de novo pathway; 5-formamido-1-(5-phospho-D-ribosyl)imidazole-4-carboxamide from 5-amino-1-(5-phospho-D-ribosyl)imidazole-4-carboxamide (10-formyl THF route): step 1/1. The protein operates within purine metabolism; IMP biosynthesis via de novo pathway; IMP from 5-formamido-1-(5-phospho-D-ribosyl)imidazole-4-carboxamide: step 1/1. The protein is Bifunctional purine biosynthesis protein PurH of Brucella abortus (strain S19).